A 476-amino-acid chain; its full sequence is MVAAPTTATELKLGTDCVIADINLAAFGRKELDIAETEMPGLMALRAKYGNEKPLKGARIAGSLHMTIQTAVLIETLEELGADVRWASCNIFSTQDHAAAAIAANGTPVFAVKGETLEEYWAYTHRILEWSDGGAPNMILDDGGDATGLVILGTKAEQDITVLDNPSNEEETFLFASIKKKLAEDSSFYSRTKAAIQGVTEETTTGVARLYKMQKSGELPFPAINVNDSVTKSKFDNLYGCRESLVDSIKRATDVMVAGKQALVVGYGDVGKGSAQSLRGLGATVCIAEVDPICALQAAMEGYRVVRLDDVVDQMDIFVTATGNYQVIRNEHLVKMKDEAIVCNIGHFDNEIDVASLKDYKWDNIKPQVDHITLPSGNKIILLAEGRLVNLGCATGHPSFVMSNSFTNQVLAQIELFTKANEYGKEVYVLPKHLDEMVARLHLSKIGANLTELSKDQADYINVPVEGPYKPDHYRY.

The substrate site is built by threonine 67, aspartate 142, and glutamate 202. NAD(+) is bound at residue 203–205; sequence TTT. Lysine 232 and aspartate 236 together coordinate substrate. NAD(+) is bound by residues asparagine 237, 266-271, glutamate 289, asparagine 324, 345-347, and asparagine 390; these read GYGDVG and IGH.

This sequence belongs to the adenosylhomocysteinase family. NAD(+) serves as cofactor.

It localises to the cytoplasm. The catalysed reaction is S-adenosyl-L-homocysteine + H2O = L-homocysteine + adenosine. It participates in amino-acid biosynthesis; L-homocysteine biosynthesis; L-homocysteine from S-adenosyl-L-homocysteine: step 1/1. Functionally, may play a key role in the regulation of the intracellular concentration of adenosylhomocysteine. The sequence is that of Adenosylhomocysteinase from Synechococcus sp. (strain CC9902).